We begin with the raw amino-acid sequence, 174 residues long: Envelope glycoprotein (174 aa).

The Extracellular segment spans residues 1–121; the sequence is VAAAQALREI…EWAVHLLKGL (121 aa). A coiled-coil region spans residues 4–54; the sequence is AQALREIERLACWSVKQANLTTSLLGDLLDDVTSIRHAVLQNRAAIDFLLL. C60 and C67 are joined by a disulfide. A coiled-coil region spans residues 72-102; it reads SDHSESIQKKFQLMKEHVNKIGVDSDPIGSW. The helical transmembrane segment at 122–142 threads the bilayer; that stretch reads LLGLVVILLLVVCLPCLLQFV. 2 S-palmitoyl cysteine; by host lipidation sites follow: C134 and C137. Over 143–174 the chain is Cytoplasmic; that stretch reads SSSIRKMIDNSLGYREERKKFQEAYKQPERVV.

This sequence belongs to the Alpharetroviruses envelope glycoprotein family. In terms of assembly, heterodimer with the surface protein. The mature envelope protein (Env) consists of a trimer of SU-TM heterodimers attached by a labile interchain disulfide bond. In terms of processing, specific enzymatic cleavages in vivo yield mature proteins. Envelope glycoproteins are synthesized as an inactive precursor that is N-glycosylated and processed likely by host cell furin or by a furin-like protease in the Golgi to yield the mature SU and TM proteins. The cleavage site between SU and TM requires the minimal sequence [KR]-X-[KR]-R. The transmembrane protein is palmitoylated. Palmitoylation is necessary for glycoprotein function and infectivity.

The protein resides in the virion membrane. Its subcellular location is the host cell membrane. In terms of biological role, the transmembrane protein (TM) acts as a class I viral fusion protein. Under the current model, the protein has at least 3 conformational states: pre-fusion native state, pre-hairpin intermediate state, and post-fusion hairpin state. During viral and target cell membrane fusion, the coiled coil regions (heptad repeats) assume a trimer-of-hairpins structure, positioning the fusion peptide in close proximity to the C-terminal region of the ectodomain. The formation of this structure appears to drive apposition and subsequent fusion of viral and target cell membranes. Membranes fusion leads to delivery of the nucleocapsid into the cytoplasm. This chain is Envelope glycoprotein (env), found in UR2 avian sarcoma virus (UR2SV).